Here is a 135-residue protein sequence, read N- to C-terminus: Large ribosomal subunit protein uL16c (135 aa).

Belongs to the universal ribosomal protein uL16 family. In terms of assembly, part of the 50S ribosomal subunit.

The protein localises to the plastid. Its subcellular location is the chloroplast. This is Large ribosomal subunit protein uL16c from Morus indica (Mulberry).